A 269-amino-acid polypeptide reads, in one-letter code: Pertussis toxin subunit 1 homolog (269 aa).

Residues 1-34 (MRCTRAIRQTARTGWLTWLAILAVTAPVTSPAWA) form the signal peptide.

This sequence belongs to the bacterial exotoxin subunit A family.

This Bordetella bronchiseptica (strain ATCC BAA-588 / NCTC 13252 / RB50) (Alcaligenes bronchisepticus) protein is Pertussis toxin subunit 1 homolog (ptxA).